The following is a 669-amino-acid chain: DNA ligase (669 aa).

Residues 31-35 (DAEYD), 80-81 (SL), and Glu112 contribute to the NAD(+) site. Lys114 functions as the N6-AMP-lysine intermediate in the catalytic mechanism. Residues Arg135, Glu172, Lys289, and Lys313 each coordinate NAD(+). Residues Cys407, Cys410, Cys425, and Cys431 each coordinate Zn(2+). In terms of domain architecture, BRCT spans 591–669 (SVPQPLADKV…EEQLIEILNN (79 aa)).

This sequence belongs to the NAD-dependent DNA ligase family. LigA subfamily. It depends on Mg(2+) as a cofactor. Requires Mn(2+) as cofactor.

The catalysed reaction is NAD(+) + (deoxyribonucleotide)n-3'-hydroxyl + 5'-phospho-(deoxyribonucleotide)m = (deoxyribonucleotide)n+m + AMP + beta-nicotinamide D-nucleotide.. Its function is as follows. DNA ligase that catalyzes the formation of phosphodiester linkages between 5'-phosphoryl and 3'-hydroxyl groups in double-stranded DNA using NAD as a coenzyme and as the energy source for the reaction. It is essential for DNA replication and repair of damaged DNA. The polypeptide is DNA ligase (Aliivibrio salmonicida (strain LFI1238) (Vibrio salmonicida (strain LFI1238))).